A 294-amino-acid chain; its full sequence is Shikimate dehydrogenase (NADP(+)) (294 aa).

Residues 23-25 (SRS) and Thr-70 contribute to the shikimate site. Lys-74 acts as the Proton acceptor in catalysis. Residues Asn-95 and Asp-110 each contribute to the shikimate site. Residues 135–139 (GAGGA), 159–164 (NRTASR), and Met-232 contribute to the NADP(+) site. Tyr-234 provides a ligand contact to shikimate. Gly-255 contributes to the NADP(+) binding site.

This sequence belongs to the shikimate dehydrogenase family. As to quaternary structure, homodimer.

The catalysed reaction is shikimate + NADP(+) = 3-dehydroshikimate + NADPH + H(+). Its pathway is metabolic intermediate biosynthesis; chorismate biosynthesis; chorismate from D-erythrose 4-phosphate and phosphoenolpyruvate: step 4/7. Involved in the biosynthesis of the chorismate, which leads to the biosynthesis of aromatic amino acids. Catalyzes the reversible NADPH linked reduction of 3-dehydroshikimate (DHSA) to yield shikimate (SA). This is Shikimate dehydrogenase (NADP(+)) from Cupriavidus pinatubonensis (strain JMP 134 / LMG 1197) (Cupriavidus necator (strain JMP 134)).